Here is a 111-residue protein sequence, read N- to C-terminus: UPF0122 protein LACR_1522 (111 aa).

It belongs to the UPF0122 family.

Its function is as follows. Might take part in the signal recognition particle (SRP) pathway. This is inferred from the conservation of its genetic proximity to ftsY/ffh. May be a regulatory protein. This is UPF0122 protein LACR_1522 from Lactococcus lactis subsp. cremoris (strain SK11).